A 450-amino-acid polypeptide reads, in one-letter code: Bifunctional protein GlmU (450 aa).

Residues methionine 1 to arginine 236 form a pyrophosphorylase region. Residues leucine 12–glycine 15, lysine 26, glutamine 79, glycine 84–threonine 85, tyrosine 107–aspartate 109, glycine 147, glutamate 162, asparagine 177, and asparagine 234 contribute to the UDP-N-acetyl-alpha-D-glucosamine site. Residue aspartate 109 participates in Mg(2+) binding. Asparagine 234 is a binding site for Mg(2+). The segment at alanine 237–aspartate 257 is linker. The segment at glycine 258–lysine 450 is N-acetyltransferase. Arginine 323 and lysine 341 together coordinate UDP-N-acetyl-alpha-D-glucosamine. Histidine 353 acts as the Proton acceptor in catalysis. Positions 356 and 367 each coordinate UDP-N-acetyl-alpha-D-glucosamine. Acetyl-CoA is bound by residues asparagine 376–tyrosine 377, serine 395, alanine 413, and arginine 430.

This sequence in the N-terminal section; belongs to the N-acetylglucosamine-1-phosphate uridyltransferase family. The protein in the C-terminal section; belongs to the transferase hexapeptide repeat family. As to quaternary structure, homotrimer. Mg(2+) is required as a cofactor.

The protein resides in the cytoplasm. It catalyses the reaction alpha-D-glucosamine 1-phosphate + acetyl-CoA = N-acetyl-alpha-D-glucosamine 1-phosphate + CoA + H(+). It carries out the reaction N-acetyl-alpha-D-glucosamine 1-phosphate + UTP + H(+) = UDP-N-acetyl-alpha-D-glucosamine + diphosphate. It functions in the pathway nucleotide-sugar biosynthesis; UDP-N-acetyl-alpha-D-glucosamine biosynthesis; N-acetyl-alpha-D-glucosamine 1-phosphate from alpha-D-glucosamine 6-phosphate (route II): step 2/2. The protein operates within nucleotide-sugar biosynthesis; UDP-N-acetyl-alpha-D-glucosamine biosynthesis; UDP-N-acetyl-alpha-D-glucosamine from N-acetyl-alpha-D-glucosamine 1-phosphate: step 1/1. It participates in bacterial outer membrane biogenesis; LPS lipid A biosynthesis. Functionally, catalyzes the last two sequential reactions in the de novo biosynthetic pathway for UDP-N-acetylglucosamine (UDP-GlcNAc). The C-terminal domain catalyzes the transfer of acetyl group from acetyl coenzyme A to glucosamine-1-phosphate (GlcN-1-P) to produce N-acetylglucosamine-1-phosphate (GlcNAc-1-P), which is converted into UDP-GlcNAc by the transfer of uridine 5-monophosphate (from uridine 5-triphosphate), a reaction catalyzed by the N-terminal domain. The polypeptide is Bifunctional protein GlmU (Zymomonas mobilis subsp. mobilis (strain ATCC 31821 / ZM4 / CP4)).